Here is a 261-residue protein sequence, read N- to C-terminus: Follistatin-related protein 3 (261 aa).

An N-terminal signal peptide occupies residues 1–26; it reads MRPRAPGPLWPLPWGALAWAVGFVGS. The region spanning 36–107 is the TB domain; it reads GVCWLQQGRE…SCEGVECGPG (72 aa). 8 disulfide bridges follow: Cys38–Cys61, Cys48–Cys92, Cys62–Cys95, Cys99–Cys110, Cys104–Cys119, Cys121–Cys153, Cys125–Cys146, and Cys135–Cys167. N-linked (GlcNAc...) asparagine glycosylation occurs at Asn73. The Follistatin-like 1 domain maps to 99–119; it reads CEGVECGPGKACRMLGGRPRC. Kazal-like domains follow at residues 113 to 169 and 189 to 245; these read LGGR…RCRK and SAHC…SCAG. The region spanning 170 to 193 is the Follistatin-like 2 domain; sequence SCAHVVCLRPQSCVVDQTGSAHCV. 3 disulfides stabilise this stretch: Cys195/Cys229, Cys200/Cys222, and Cys211/Cys243. A glycan (N-linked (GlcNAc...) asparagine) is linked at Asn215. A disordered region spans residues 242–261; it reads SCAGTPEPLDPESEEEENFV. Over residues 250–261 the composition is skewed to acidic residues; that stretch reads LDPESEEEENFV.

As to quaternary structure, interacts with INHBA and INHBB. Interacts with FN1. Interacts with ADAM12. Interacts with MLLT10; the interaction enhances MLLT10 in vitro transcriptional activity and self-association. Interacts with MSTN.

The protein resides in the secreted. Its subcellular location is the nucleus. Its function is as follows. The secreted form is a binding and antagonizing protein for members of the TGF-beta family, such as activin, BMP2 and MSTN. Inhibits activin A-, activin B-, BMP2- and MSDT-induced cellular signaling; more effective on activin A than on activin B. Involved in bone formation; inhibits osteoclast differentiation. Involved in hematopoiesis; involved in differentiation of hemopoietic progenitor cells, increases hematopoietic cell adhesion to fibronectin and seems to contribute to the adhesion of hematopoietic precursor cells to the bone marrow stroma. The nuclear form is probably involved in transcriptional regulation via interaction with MLLT10. The sequence is that of Follistatin-related protein 3 (FSTL3) from Bos taurus (Bovine).